The sequence spans 114 residues: T cell receptor beta variable 4-1 (114 aa).

Positions 1–21 (MGCRLLCCAVLCLLGAVPIDT) are cleaved as a signal peptide. One can recognise an Ig-like domain in the interval 22-114 (EVTQTPKHLV…SALYLCASSQ (93 aa)). A disulfide bond links C42 and C110. Residues N76 and N89 are each glycosylated (N-linked (GlcNAc...) asparagine).

Alpha-beta TR is a heterodimer composed of an alpha and beta chain; disulfide-linked. The alpha-beta TR is associated with the transmembrane signaling CD3 coreceptor proteins to form the TR-CD3 (TcR or TCR). The assembly of alpha-beta TR heterodimers with CD3 occurs in the endoplasmic reticulum where a single alpha-beta TR heterodimer associates with one CD3D-CD3E heterodimer, one CD3G-CD3E heterodimer and one CD247 homodimer forming a stable octameric structure. CD3D-CD3E and CD3G-CD3E heterodimers preferentially associate with TR alpha and TR beta chains, respectively. The association of the CD247 homodimer is the last step of TcR assembly in the endoplasmic reticulum and is required for transport to the cell surface.

It is found in the cell membrane. V region of the variable domain of T cell receptor (TR) beta chain that participates in the antigen recognition. Alpha-beta T cell receptors are antigen specific receptors which are essential to the immune response and are present on the cell surface of T lymphocytes. Recognize peptide-major histocompatibility (MH) (pMH) complexes that are displayed by antigen presenting cells (APC), a prerequisite for efficient T cell adaptive immunity against pathogens. Binding of alpha-beta TR to pMH complex initiates TR-CD3 clustering on the cell surface and intracellular activation of LCK that phosphorylates the ITAM motifs of CD3G, CD3D, CD3E and CD247 enabling the recruitment of ZAP70. In turn ZAP70 phosphorylates LAT, which recruits numerous signaling molecules to form the LAT signalosome. The LAT signalosome propagates signal branching to three major signaling pathways, the calcium, the mitogen-activated protein kinase (MAPK) kinase and the nuclear factor NF-kappa-B (NF-kB) pathways, leading to the mobilization of transcription factors that are critical for gene expression and essential for T cell growth and differentiation. The T cell repertoire is generated in the thymus, by V-(D)-J rearrangement. This repertoire is then shaped by intrathymic selection events to generate a peripheral T cell pool of self-MH restricted, non-autoaggressive T cells. Post-thymic interaction of alpha-beta TR with the pMH complexes shapes TR structural and functional avidity. This Homo sapiens (Human) protein is T cell receptor beta variable 4-1.